A 160-amino-acid chain; its full sequence is Endoribonuclease YbeY (160 aa).

The Zn(2+) site is built by histidine 121, histidine 125, and histidine 131.

The protein belongs to the endoribonuclease YbeY family. Zn(2+) serves as cofactor.

The protein resides in the cytoplasm. In terms of biological role, single strand-specific metallo-endoribonuclease involved in late-stage 70S ribosome quality control and in maturation of the 3' terminus of the 16S rRNA. The polypeptide is Endoribonuclease YbeY (Syntrophus aciditrophicus (strain SB)).